The following is a 292-amino-acid chain: Tissue factor (292 aa).

A signal peptide spans 1–32; sequence MAPPTRLQVPRPGTAVPYTVLLGWLLAQVARA. Topologically, residues 33–250 are extracellular; that stretch reads ADTTGRAYNL…SREQGRAREM (218 aa). Fibronectin type-III domains follow at residues 35–126 and 148–240; these read TTGR…PFRN and QVGT…TECT. A glycan (N-linked (GlcNAc...) asparagine) is linked at Asn41. 2 consecutive short sequence motifs (WKS motif) follow at residues 44–46 and 75–77; these read WKS. An intrachain disulfide couples Cys79 to Cys87. 4 N-linked (GlcNAc...) asparagine glycosylation sites follow: Asn114, Asn154, Asn167, and Asn182. Cysteines 216 and 239 form a disulfide. The helical transmembrane segment at 251 to 271 threads the bilayer; the sequence is FFIIGAVVVVALLIIVLSVTV. At 272–292 the chain is on the cytoplasmic side; sequence YKCRKARAGPSGKESSPLNIA. Cys274 carries the S-palmitoyl cysteine lipid modification.

It belongs to the tissue factor family. Interacts with HSPE; the interaction, inhibited by heparin, promotes the generation of activated factor X and activates coagulation in the presence of activated factor VII. Brain, heart.

It is found in the membrane. Its function is as follows. Initiates blood coagulation by forming a complex with circulating factor VII or VIIa. The [TF:VIIa] complex activates factors IX or X by specific limited proteolysis. TF plays a role in normal hemostasis by initiating the cell-surface assembly and propagation of the coagulation protease cascade. The protein is Tissue factor (F3) of Oryctolagus cuniculus (Rabbit).